A 344-amino-acid chain; its full sequence is Phosphate acyltransferase (344 aa).

This sequence belongs to the PlsX family. Homodimer. Probably interacts with PlsY.

It localises to the cytoplasm. It catalyses the reaction a fatty acyl-[ACP] + phosphate = an acyl phosphate + holo-[ACP]. Its pathway is lipid metabolism; phospholipid metabolism. In terms of biological role, catalyzes the reversible formation of acyl-phosphate (acyl-PO(4)) from acyl-[acyl-carrier-protein] (acyl-ACP). This enzyme utilizes acyl-ACP as fatty acyl donor, but not acyl-CoA. The polypeptide is Phosphate acyltransferase (Acaryochloris marina (strain MBIC 11017)).